The sequence spans 619 residues: Sodium-dependent dopamine transporter (619 aa).

Residues 1–56 (MSKSKCSVGPMSSVVAPAKESNAVGPREVELILVKEQNGVQLTNSTLINPPQTPVE) are Cytoplasmic-facing. The discontinuously helical transmembrane segment at 57–95 (AQERETWSKKIDFLLSVIGFAVDLANVWRFPYLCYKNGG) threads the bilayer. The Na(+) site is built by Gly75, Ala77, Val78, Asp79, and Asn82. Asp79 contributes to the dopamine binding site. 2 helical membrane passes run 96-127 (GAFL…NREG) and 128-171 (AAGV…FSSF). Dopamine contacts are provided by Ser149 and Gly153. Residues 172 to 235 (TMDLPWIHCN…SRGIDDLGPP (64 aa)) are Extracellular-facing. The cysteines at positions 180 and 189 are disulfide-linked. Residues Asn181, Asn188, Asn196, and Asn204 are each glycosylated (N-linked (GlcNAc...) asparagine). 2 helical membrane-spanning segments follow: residues 236–255 (RWQL…FSLW) and 256–286 (KGVK…GVTL). Residues 287-305 (PGAMDGIRAYLSVDFYRLC) are Extracellular-facing. The chain crosses the membrane as a discontinuously helical span at residues 306–334 (EASVWIDAATQVCFSLGVGFGVLIAFSSY). Gln316 lines the chloride pocket. Phe319 contacts dopamine. Ser320 and Asn352 together coordinate Na(+). Ser320 contributes to the chloride binding site. The chain crosses the membrane as a helical span at residues 335-375 (NKFTNNCYRDAIITTSINSLTSFSSGFVVFSFLGYMAQKHN). Ser356 provides a ligand contact to chloride. At 376 to 399 (VPIRDVATDGPGLIFIIYPEAIAT) the chain is on the extracellular side. Transmembrane regions (helical) follow at residues 400–441 (LPLS…QLLH), 442–465 (RHRE…CVTN), and 466–498 (GGIY…AWFY). Na(+)-binding residues include Leu417, Asp420, and Ser421. Residues Ser421 and Ala422 each contribute to the dopamine site. At 499–515 (GVQQFSDDIKQMTGQRP) the chain is on the cytoplasmic side. The helical transmembrane segment at 516-541 (NLYWRLCWKLVSPCFLLYVVVVSIVT) threads the bilayer. The Extracellular portion of the chain corresponds to 542-552 (FRPPHYGAYIF). Residues 553-582 (PDWANALGWIIATSSMAMVPIYATYKFCSL) traverse the membrane as a helical segment. Residues 560–589 (GWIIATSSMAMVPIYATYKFCSLPGSFREK) form an interaction with TGFB1I1 region. Residues 583-619 (PGSFREKLAYAITPEKDHQLVDRGEVRQFTLRHWLLL) lie on the Cytoplasmic side of the membrane.

The protein belongs to the sodium:neurotransmitter symporter (SNF) (TC 2.A.22) family. SLC6A3 subfamily. As to quaternary structure, monomer. Homooligomer; disulfide-linked. Interacts with PRKCABP and TGFB1I1. Interacts (via N-terminus) with SYNGR3 (via N-terminus). Interacts with SLC18A2. Interacts with TOR1A (ATP-bound); TOR1A regulates SLC6A3 subcellular location. Interacts with alpha-synuclein/SNCA. Interacts with SEPTIN4. As to expression, brain. Expressed in the substantia nigra and ventral tegmental area, regions that contain dopaminergic cell bodies.

It is found in the cell membrane. It localises to the cell projection. The protein localises to the neuron projection. The protein resides in the axon. It catalyses the reaction dopamine(out) + chloride(out) + Na(+)(out) = dopamine(in) + chloride(in) + Na(+)(in). The catalysed reaction is (R)-noradrenaline(out) + chloride(out) + Na(+)(out) = (R)-noradrenaline(in) + chloride(in) + Na(+)(in). It carries out the reaction dopamine(out) + chloride(out) + 2 Na(+)(out) = dopamine(in) + chloride(in) + 2 Na(+)(in). Inhibited by mazindol, cocaine, desipramine, GBR 12783 dihydrochloride, GBR 12909 dihydrochloride and nomifensine. Inhibited by zinc ions. Mediates sodium- and chloride-dependent transport of dopamine. Also mediates sodium- and chloride-dependent transport of norepinephrine (also known as noradrenaline). Regulator of light-dependent retinal hyaloid vessel regression, downstream of OPN5 signaling. This is Sodium-dependent dopamine transporter (Slc6a3) from Rattus norvegicus (Rat).